The sequence spans 259 residues: Cytosolic Fe-S cluster assembly factor Nubp2 homolog (259 aa).

14-21 (GKGGVGKS) serves as a coordination point for ATP. [4Fe-4S] cluster-binding residues include Cys-188 and Cys-191.

The protein belongs to the Mrp/NBP35 ATP-binding proteins family. NUBP2/CFD1 subfamily. As to quaternary structure, heterotetramer of 2 Nubp1 and 2 Nubp2 chains. It depends on [4Fe-4S] cluster as a cofactor.

It is found in the cytoplasm. Functionally, component of the cytosolic iron-sulfur (Fe/S) protein assembly (CIA) machinery. Required for maturation of extramitochondrial Fe-S proteins. The Nubp1-Nubp2 heterotetramer forms a Fe-S scaffold complex, mediating the de novo assembly of an Fe-S cluster and its transfer to target apoproteins. In Anopheles gambiae (African malaria mosquito), this protein is Cytosolic Fe-S cluster assembly factor Nubp2 homolog.